Reading from the N-terminus, the 437-residue chain is Glycogen synthase (437 aa).

Position 15 (K15) interacts with ADP-alpha-D-glucose.

Belongs to the glycosyltransferase 1 family. Bacterial/plant glycogen synthase subfamily.

The catalysed reaction is [(1-&gt;4)-alpha-D-glucosyl](n) + ADP-alpha-D-glucose = [(1-&gt;4)-alpha-D-glucosyl](n+1) + ADP + H(+). Its pathway is glycan biosynthesis; glycogen biosynthesis. In terms of biological role, synthesizes alpha-1,4-glucan chains using ADP-glucose. The chain is Glycogen synthase from Thermus thermophilus (strain ATCC 27634 / DSM 579 / HB8).